Reading from the N-terminus, the 248-residue chain is Small ribosomal subunit protein uS2 (248 aa).

It belongs to the universal ribosomal protein uS2 family.

The sequence is that of Small ribosomal subunit protein uS2 from Thiobacillus denitrificans (strain ATCC 25259 / T1).